A 624-amino-acid polypeptide reads, in one-letter code: MKNCIAAIPEVKEMVEKAKLKGIETPHTRFPNQFPKCPYGLKGVYCILCANGPCRITEKTPYGVCGATADVIVARNLCRAVAAGTSCYVHCAENAARALLSAGKGEGSYEIRNEKKLKFLAKKLGFDANKDAKQLAVEVAEFILDDMYKPRWEKSELVPKLCPEKRLEVFEKLDILPGGAKGEIVDALTKTSTNLNSNPMDLLVHCLRLGLHAGFTGLLMTCWLNDILFGSPKITVVENGFSSVKPNNVNIMITGHQHALIQPLCEAAMEEDLIKMAKEAGADEIKIIGATCNGQDMETRIAHLPESFVGYIANNFTTEPLVATGLIDAVVSEFNCTFHGLKFVAEKTKTKLICIDDMAYVEGAEYIPWEPENAKEKAREIIKKAIEAFKERKGMQKDYYDEKVKSVVGVGEESLVEFLGGSVKPLIELIASGKIKGVVGVVGCSNLASGGHDNIIVTLTKELIKRDILVLAGGCVNSPLKHAGLFDPASAELAGENLKEVCKSLGIPPVLNFGACLSIARIEQVAVAIAEELGVDIPDLPVAASAPQWLEEQALADATYAVDMGFTVHVSPVPFVTGSELVTKVLTEAVEGLTGGKLIPEPNPYKAADLLEQTIMEKRKKLGI.

Residues C37, C46, C49, C54, and C65 each contribute to the [4Fe-4S] cluster site. [Ni-4Fe-5S] cluster contacts are provided by H256, C292, C336, C444, C475, and C516.

The protein belongs to the Ni-containing carbon monoxide dehydrogenase family. As to quaternary structure, homodimer. Requires [4Fe-4S] cluster as cofactor. The cofactor is [Ni-4Fe-5S] cluster.

It carries out the reaction CO + 2 oxidized [2Fe-2S]-[ferredoxin] + H2O = 2 reduced [2Fe-2S]-[ferredoxin] + CO2 + 2 H(+). In terms of biological role, CODH oxidizes carbon monoxide coupled, via CooF, to the reduction of a hydrogen cation by a hydrogenase (possibly CooH). The polypeptide is Carbon monoxide dehydrogenase (cooS) (Methanocaldococcus jannaschii (strain ATCC 43067 / DSM 2661 / JAL-1 / JCM 10045 / NBRC 100440) (Methanococcus jannaschii)).